A 205-amino-acid chain; its full sequence is Anaerobic dimethyl sulfoxide reductase chain B (205 aa).

4Fe-4S ferredoxin-type domains follow at residues 5–33 (YGFF…LTPE), 59–89 (FAYY…KRED), and 90–119 (GFVV…YNET). Cysteine 14, cysteine 17, cysteine 20, cysteine 24, cysteine 67, cysteine 70, cysteine 75, cysteine 79, cysteine 99, cysteine 102, cysteine 105, cysteine 109, cysteine 126, cysteine 129, cysteine 141, and cysteine 145 together coordinate [4Fe-4S] cluster. Positions 184 to 205 (KPNANSRPTGDTTGYLANPKEV) are disordered. Polar residues predominate over residues 186-195 (NANSRPTGDT).

As to quaternary structure, heterotrimeric enzyme composed of a catalytic heterodimer (DmsAB) and a membrane anchor protein (DmsC). The cofactor is [4Fe-4S] cluster.

In terms of biological role, electron transfer subunit of the terminal reductase during anaerobic growth on various sulfoxide and N-oxide compounds. The chain is Anaerobic dimethyl sulfoxide reductase chain B (dmsB) from Escherichia coli (strain K12).